Consider the following 489-residue polypeptide: Glucose-1-phosphate adenylyltransferase small subunit, chloroplastic/amyloplastic (489 aa).

Residues 1-52 (ITVPSTSSKNLQNSLAFSSSSLSGDKIQTTSFLNRRYCRISSRAPIVVSPKA) constitute a chloroplast transit peptide.

Belongs to the bacterial/plant glucose-1-phosphate adenylyltransferase family. In terms of assembly, heterotetramer. In terms of tissue distribution, prominently expressed in the leaves. A lower level expression is seen in the roots.

It localises to the plastid. It is found in the chloroplast. The protein resides in the amyloplast. The enzyme catalyses alpha-D-glucose 1-phosphate + ATP + H(+) = ADP-alpha-D-glucose + diphosphate. It functions in the pathway glycan biosynthesis; starch biosynthesis. Its activity is regulated as follows. Activated by 3'phosphoglycerate, inhibited by orthophosphate. Allosteric regulation. This protein plays a role in synthesis of starch. It catalyzes the synthesis of the activated glycosyl donor, ADP-glucose from Glc-1-P and ATP. The chain is Glucose-1-phosphate adenylyltransferase small subunit, chloroplastic/amyloplastic (AGPB1) from Beta vulgaris (Sugar beet).